The following is a 69-amino-acid chain: Large ribosomal subunit protein bL31 (69 aa).

Cys-16, Cys-18, Cys-37, and Cys-40 together coordinate Zn(2+).

This sequence belongs to the bacterial ribosomal protein bL31 family. Type A subfamily. Part of the 50S ribosomal subunit. It depends on Zn(2+) as a cofactor.

Its function is as follows. Binds the 23S rRNA. The polypeptide is Large ribosomal subunit protein bL31 (Buchnera aphidicola subsp. Baizongia pistaciae (strain Bp)).